The sequence spans 352 residues: 3-isopropylmalate dehydrogenase (352 aa).

NAD(+) is bound at residue 76 to 89 (GPKWENLPHEHKPE). Substrate is bound by residues Arg-96, Arg-106, Arg-134, and Asp-219. 3 residues coordinate Mg(2+): Asp-219, Asp-243, and Asp-247. NAD(+) is bound at residue 276 to 288 (GSAPDIAGQNKAN).

This sequence belongs to the isocitrate and isopropylmalate dehydrogenases family. LeuB type 1 subfamily. Homodimer. The cofactor is Mg(2+). Mn(2+) serves as cofactor.

The protein resides in the cytoplasm. It carries out the reaction (2R,3S)-3-isopropylmalate + NAD(+) = 4-methyl-2-oxopentanoate + CO2 + NADH. It participates in amino-acid biosynthesis; L-leucine biosynthesis; L-leucine from 3-methyl-2-oxobutanoate: step 3/4. In terms of biological role, catalyzes the oxidation of 3-carboxy-2-hydroxy-4-methylpentanoate (3-isopropylmalate) to 3-carboxy-4-methyl-2-oxopentanoate. The product decarboxylates to 4-methyl-2 oxopentanoate. This Chlorobium chlorochromatii (strain CaD3) protein is 3-isopropylmalate dehydrogenase.